Reading from the N-terminus, the 184-residue chain is Oligoribonuclease (184 aa).

In terms of domain architecture, Exonuclease spans 9 to 172; it reads LIWIDLEMTG…DDIRESIEEL (164 aa). Tyr130 is an active-site residue.

Belongs to the oligoribonuclease family.

The protein resides in the cytoplasm. 3'-to-5' exoribonuclease specific for small oligoribonucleotides. The protein is Oligoribonuclease of Actinobacillus pleuropneumoniae serotype 5b (strain L20).